Here is a 515-residue protein sequence, read N- to C-terminus: Anthranilate synthase component 1 (515 aa).

L-tryptophan contacts are provided by residues T40 and 291 to 293 (PYM). 328–329 (GT) contacts chorismate. E361 lines the Mg(2+) pocket. Chorismate contacts are provided by residues Y449, R469, 483–485 (GAG), and G485. E498 provides a ligand contact to Mg(2+).

Belongs to the anthranilate synthase component I family. In terms of assembly, heterotetramer consisting of two non-identical subunits: a beta subunit (TrpG) and a large alpha subunit (TrpE). The cofactor is Mg(2+).

The catalysed reaction is chorismate + L-glutamine = anthranilate + pyruvate + L-glutamate + H(+). The protein operates within amino-acid biosynthesis; L-tryptophan biosynthesis; L-tryptophan from chorismate: step 1/5. Feedback inhibited by tryptophan. Its function is as follows. Part of a heterotetrameric complex that catalyzes the two-step biosynthesis of anthranilate, an intermediate in the biosynthesis of L-tryptophan. In the first step, the glutamine-binding beta subunit (TrpG) of anthranilate synthase (AS) provides the glutamine amidotransferase activity which generates ammonia as a substrate that, along with chorismate, is used in the second step, catalyzed by the large alpha subunit of AS (TrpE) to produce anthranilate. In the absence of TrpG, TrpE can synthesize anthranilate directly from chorismate and high concentrations of ammonia. This Buchnera aphidicola subsp. Schizaphis graminum (strain Sg) protein is Anthranilate synthase component 1 (trpE).